A 165-amino-acid chain; its full sequence is CDP-archaeol synthase (165 aa).

The next 3 helical transmembrane spans lie at 4–24 (IVQL…AVLA), 78–98 (LLDA…GAFV), and 118–138 (FLLM…PLLL).

The protein belongs to the CDP-archaeol synthase family. Mg(2+) serves as cofactor.

The protein resides in the cell membrane. The enzyme catalyses 2,3-bis-O-(geranylgeranyl)-sn-glycerol 1-phosphate + CTP + H(+) = CDP-2,3-bis-O-(geranylgeranyl)-sn-glycerol + diphosphate. Its pathway is membrane lipid metabolism; glycerophospholipid metabolism. In terms of biological role, catalyzes the formation of CDP-2,3-bis-(O-geranylgeranyl)-sn-glycerol (CDP-archaeol) from 2,3-bis-(O-geranylgeranyl)-sn-glycerol 1-phosphate (DGGGP) and CTP. This reaction is the third ether-bond-formation step in the biosynthesis of archaeal membrane lipids. This chain is CDP-archaeol synthase, found in Pyrobaculum calidifontis (strain DSM 21063 / JCM 11548 / VA1).